Reading from the N-terminus, the 362-residue chain is Cytoskeleton protein RodZ (362 aa).

The Cytoplasmic segment spans residues 1 to 111; sequence MNTEASQDQT…LGKKHKKRDG (111 aa). The 61-residue stretch at 19 to 79 folds into the HTH cro/C1-type domain; it reads LRQARESLGL…KLVHLPEDEL (61 aa). The segment at residues 30–49 is a DNA-binding region (H-T-H motif); that stretch reads QQTVAERLCLKVSTIRDIEE. Residues 112-132 traverse the membrane as a helical; Signal-anchor for type II membrane protein segment; it reads WLMSFTWLIVLVVLGLTGAWW. The Periplasmic portion of the chain corresponds to 133 to 362; that stretch reads WQNHQAQQAE…RVARLTVGVE (230 aa). The disordered stretch occupies residues 151–277; that stretch reads SAQLSQNGGQ…LPTADAGVSG (127 aa). A compositionally biased stretch (low complexity) spans 193–221; the sequence is STSAVTNSATTSSATTSSVPTTSSVPKTT. Over residues 223 to 242 the composition is skewed to polar residues; it reads VPKTNSTEPVDTANTNTTMH. Positions 246 to 259 are enriched in low complexity; the sequence is AASAAVSPSQVPQP.

The protein belongs to the RodZ family.

The protein localises to the cell inner membrane. Its function is as follows. Cytoskeletal protein that is involved in cell-shape control through regulation of the length of the long axis. This Yersinia pseudotuberculosis serotype IB (strain PB1/+) protein is Cytoskeleton protein RodZ.